The primary structure comprises 420 residues: Sulfate adenylyltransferase (420 aa).

Position 2 is an N-acetylalanine (alanine 2).

Belongs to the sulfate adenylyltransferase family. Mg(2+) is required as a cofactor.

It carries out the reaction sulfate + ATP + H(+) = adenosine 5'-phosphosulfate + diphosphate. Its pathway is sulfur metabolism; hydrogen sulfide biosynthesis; sulfite from sulfate: step 1/3. Its activity is regulated as follows. Inhibited by adenosine 5'-phosphosulfate (APS), but not by 3'phosphoadenosine 5'-phosphosulfate (PAPS). Inhibited by AMP, ADP, CTP, GTP, ITP, UTP and anions other than those in group IV. In Pyropia yezoensis (Susabi-nori), this protein is Sulfate adenylyltransferase.